The chain runs to 365 residues: MIGPEHEFSINDENFNPVPISDEILKKIGGRTVNEAKLGRVVIGKELQKHVIELKPARPFESLSEFEETMQEGVEELLSVMDGYKLLGLGMHPLLRLEDAKVWNHRDRRIYQAYDRLFNIKQHGWLNIQSYQLNIPFSSEKEAVELHNKIRVLLPYIAAVASASPICEGKSYYVDTRLYFYRINQKEVPEICNDVIPERISSLKEYRSILNGIYEELRRKGAYVLCREWVNSRGVIVRFSRKCLEIKVMDEQECIKSDVALTAFIRAILRAELEELPVDVLIEKLNSAMRSGTEKLKPELKELLKKSKEHADEEERRYMKVVKLRIEEGSLGERILMNMPEISREEIISLCEELSRCLERNEVYL.

This is an uncharacterized protein from Archaeoglobus fulgidus (strain ATCC 49558 / DSM 4304 / JCM 9628 / NBRC 100126 / VC-16).